Here is a 436-residue protein sequence, read N- to C-terminus: MRIVIAGAGEVGYHLAMSLAPNHDVIIIEKDVSRFERVSELDVVAINGNAANMKVLRDAGVERADVFLAVTGNDEVNLLSGLAAKKVGAKNVIVRVENPEYVDRPIVKEHPLGYDVLICPQLSLAQEAARLIGIPGAIEVVTFSGGKVEMIELQVMEGSKADGKAIADLYLPQNVVIASIYRNGHIEIPRGDTVLRAGDRVAIVSKTEDVEMLKGIFGPPVTRRVTIFGAGTIGSYTAKILAKGMTSVKLIESSMERCEALSGELEGVRIVCGDATDIEFLIEEEIGKSDAVLAATESDEKNLLISLLSKNLGARIAIAKVEKREYVKLFEAVGVDVALNPRSVTYNEVSKLLRTMRIETLAEIEGTAVVEVVVRNTRLVGKALKDLPLPKDAIIGAIVRGNECLIPRGDTTIEYEDRLLVFAKWDEIEKIEEIFR.

The 118-residue stretch at 1 to 118 (MRIVIAGAGE…EHPLGYDVLI (118 aa)) folds into the RCK N-terminal 1 domain. Residues 7-11 (GAGEV), E29, 71-72 (TG), and R95 each bind NAD(+). The RCK C-terminal 1 domain maps to 138–219 (IEVVTFSGGK…VEMLKGIFGP (82 aa)). The RCK N-terminal 2 domain occupies 222–339 (TRRVTIFGAG…FEAVGVDVAL (118 aa)). 226–253 (TIFGAGTIGSYTAKILAKGMTSVKLIES) serves as a coordination point for NAD(+). Residues 356 to 436 (MRIETLAEIE…EIEKIEEIFR (81 aa)) form the RCK C-terminal 2 domain.

Part of a potassium transport system. The sequence is that of Trk system potassium uptake protein TrkA homolog (trkA) from Archaeoglobus fulgidus (strain ATCC 49558 / DSM 4304 / JCM 9628 / NBRC 100126 / VC-16).